The primary structure comprises 344 residues: Trace amine-associated receptor 8a (344 aa).

Over 1-33 the chain is Extracellular; sequence MTSNFSQAPLQLCYENVNASCIKTPYSPGLRVL. N4 and N18 each carry an N-linked (GlcNAc...) asparagine glycan. Disulfide bonds link C21–C185 and C96–C189. The chain crosses the membrane as a helical span at residues 34–54; the sequence is LYMVFGFGAVLAVCGNLLVVI. The Cytoplasmic segment spans residues 55-67; that stretch reads SVLHFKQLHSPAN. A helical transmembrane segment spans residues 68 to 88; sequence FLIASLASADFLVGISVMPFS. The Extracellular portion of the chain corresponds to 89–102; sequence MVRSIESCWYFGDT. Residues 103–127 traverse the membrane as a helical segment; it reads FCSLHSCCDAAFCYSSLFHLCFISV. The Cytoplasmic portion of the chain corresponds to 128-146; it reads DRYIAVTDPLVYPTKFTVS. The chain crosses the membrane as a helical span at residues 147 to 167; sequence VSGICISISWILPLVYSSAVF. At 168–196 the chain is on the extracellular side; sequence YTGISATGIENLVSALNCVGGCQIVVNQD. Residues 197 to 217 form a helical membrane-spanning segment; the sequence is WVLIDFLLFLIPTLVMIILYS. Over 218 to 260 the chain is Cytoplasmic; sequence KIFLVAKQQAVKIETSISGSKGESSLESHKARVAKRERKAAKT. Residues 261–281 traverse the membrane as a helical segment; that stretch reads LGVTVVAFMVSWLPYTIDTLI. Over 282–291 the chain is Extracellular; the sequence is DAFMGFITPA. The chain crosses the membrane as a helical span at residues 292-314; sequence YVYEICCWSAYYNSAMNPLIYAF. At 315 to 344 the chain is on the cytoplasmic side; that stretch reads FYPWFRKAIKLILSGEILKSHSSTMSLFSE.

Belongs to the G-protein coupled receptor 1 family.

The protein resides in the cell membrane. Its function is as follows. Olfactory receptor activated by trace amines. Trace amine compounds are enriched in animal body fluids and act on trace amine-associated receptors (TAARs) to elicit both intraspecific and interspecific innate behaviors. Ligand-binding causes a conformation change that triggers signaling via G(s)-class of G alpha proteins (GNAL or GNAS). In Rattus norvegicus (Rat), this protein is Trace amine-associated receptor 8a.